A 550-amino-acid chain; its full sequence is Chaperonin GroEL (550 aa).

Residues 30 to 33 (TLGP), K51, 87 to 91 (DGTTT), G415, 479 to 481 (NAA), and D495 each bind ATP. A disordered region spans residues 526–550 (KDEKSDLGNSSAPSAGGMGGMGGMM). Residues 541 to 550 (GGMGGMGGMM) are compositionally biased toward gly residues.

Belongs to the chaperonin (HSP60) family. Forms a cylinder of 14 subunits composed of two heptameric rings stacked back-to-back. Interacts with the co-chaperonin GroES.

It localises to the cytoplasm. It carries out the reaction ATP + H2O + a folded polypeptide = ADP + phosphate + an unfolded polypeptide.. Together with its co-chaperonin GroES, plays an essential role in assisting protein folding. The GroEL-GroES system forms a nano-cage that allows encapsulation of the non-native substrate proteins and provides a physical environment optimized to promote and accelerate protein folding. The chain is Chaperonin GroEL from Buchnera aphidicola subsp. Baizongia pistaciae (strain Bp).